The sequence spans 2339 residues: DNA-directed RNA polymerase III subunit RPC1 (2339 aa).

Zn(2+) contacts are provided by Cys88, Cys91, Cys98, His101, Cys128, Cys131, and Cys175. Positions 611, 613, and 615 each coordinate Mg(2+). A bridging helix region spans residues Pro955 to Glu967. Disordered regions lie at residues Glu1503–Tyr1557 and Leu2038–Arg2079. Over residues Pro1509–Asn1520 the composition is skewed to basic and acidic residues. Low complexity predominate over residues Tyr1521–Tyr1557. The segment covering Leu2038–Asn2047 has biased composition (basic and acidic residues). Residues Asp2049–Asn2059 are compositionally biased toward low complexity.

Belongs to the RNA polymerase beta' chain family. In terms of assembly, component of the RNA polymerase III (Pol III) complex consisting of 17 subunits.

The protein resides in the nucleus. The catalysed reaction is RNA(n) + a ribonucleoside 5'-triphosphate = RNA(n+1) + diphosphate. DNA-dependent RNA polymerase catalyzes the transcription of DNA into RNA using the four ribonucleoside triphosphates as substrates. Largest and catalytic core component of RNA polymerase III which synthesizes small RNAs, such as 5S rRNA and tRNAs. Forms the polymerase active center together with the second largest subunit. A single-stranded DNA template strand of the promoter is positioned within the central active site cleft of Pol III. A bridging helix emanates from RPC1 and crosses the cleft near the catalytic site and is thought to promote translocation of Pol III by acting as a ratchet that moves the RNA-DNA hybrid through the active site by switching from straight to bent conformations at each step of nucleotide addition. The chain is DNA-directed RNA polymerase III subunit RPC1 from Plasmodium falciparum.